We begin with the raw amino-acid sequence, 546 residues long: Pyrophosphate--fructose 6-phosphate 1-phosphotransferase (546 aa).

G80 contributes to the diphosphate binding site. D174 contacts Mg(2+). Residues 202-204 (TID), 241-242 (KY), 249-251 (MGR), E310, and 420-423 (YEGR) each bind substrate. D204 functions as the Proton acceptor in the catalytic mechanism.

This sequence belongs to the phosphofructokinase type A (PFKA) family. PPi-dependent PFK group II subfamily. Clade 'Long' sub-subfamily. Homodimer. Mg(2+) serves as cofactor. The cofactor is Mn(2+).

Its subcellular location is the cytoplasm. It catalyses the reaction beta-D-fructose 6-phosphate + diphosphate = beta-D-fructose 1,6-bisphosphate + phosphate + H(+). It functions in the pathway carbohydrate degradation; glycolysis; D-glyceraldehyde 3-phosphate and glycerone phosphate from D-glucose: step 3/4. With respect to regulation, non-allosteric. Competitively inhibited by PPi, Pi and fructose 1,6-bisphosphate. In terms of biological role, catalyzes the phosphorylation of D-fructose 6-phosphate, the first committing step of glycolysis. Uses inorganic phosphate (PPi) as phosphoryl donor instead of ATP like common ATP-dependent phosphofructokinases (ATP-PFKs), which renders the reaction reversible, and can thus function both in glycolysis and gluconeogenesis. Consistently, PPi-PFK can replace the enzymes of both the forward (ATP-PFK) and reverse (fructose-bisphosphatase (FBPase)) reactions. In Entamoeba histolytica (strain ATCC 30459 / HM-1:IMSS / ABRM), this protein is Pyrophosphate--fructose 6-phosphate 1-phosphotransferase.